Reading from the N-terminus, the 227-residue chain is uncharacterized protein (227 aa).

A run of 2 helical transmembrane segments spans residues 13–35 and 155–177; these read CVRAYAVFAIAIMVLTVAWFAFS and IFFRGCVVFLVMLTLTISSMVFL. The disordered stretch occupies residues 192–227; sequence GDARPRPAGPQGTARSRTDEAQVSPGTPPECPVSVF. Pro residues predominate over residues 217 to 227; it reads GTPPECPVSVF.

It is found in the cell membrane. This is an uncharacterized protein from Treponema pallidum (strain Nichols).